Consider the following 264-residue polypeptide: Thiazole synthase (264 aa).

The active-site Schiff-base intermediate with DXP is Lys-106. Residues Gly-167, 193 to 194 (AG), and 215 to 216 (NT) contribute to the 1-deoxy-D-xylulose 5-phosphate site.

The protein belongs to the ThiG family. Homotetramer. Forms heterodimers with either ThiH or ThiS.

It localises to the cytoplasm. It catalyses the reaction [ThiS sulfur-carrier protein]-C-terminal-Gly-aminoethanethioate + 2-iminoacetate + 1-deoxy-D-xylulose 5-phosphate = [ThiS sulfur-carrier protein]-C-terminal Gly-Gly + 2-[(2R,5Z)-2-carboxy-4-methylthiazol-5(2H)-ylidene]ethyl phosphate + 2 H2O + H(+). It functions in the pathway cofactor biosynthesis; thiamine diphosphate biosynthesis. Functionally, catalyzes the rearrangement of 1-deoxy-D-xylulose 5-phosphate (DXP) to produce the thiazole phosphate moiety of thiamine. Sulfur is provided by the thiocarboxylate moiety of the carrier protein ThiS. In vitro, sulfur can be provided by H(2)S. The chain is Thiazole synthase from Xylella fastidiosa (strain Temecula1 / ATCC 700964).